The following is a 315-amino-acid chain: Ribosomal RNA small subunit methyltransferase H (315 aa).

S-adenosyl-L-methionine-binding positions include 42 to 44 (GGH), Asp-59, Phe-96, Asp-108, and Gln-115.

The protein belongs to the methyltransferase superfamily. RsmH family.

The protein localises to the cytoplasm. The enzyme catalyses cytidine(1402) in 16S rRNA + S-adenosyl-L-methionine = N(4)-methylcytidine(1402) in 16S rRNA + S-adenosyl-L-homocysteine + H(+). Its function is as follows. Specifically methylates the N4 position of cytidine in position 1402 (C1402) of 16S rRNA. This is Ribosomal RNA small subunit methyltransferase H from Gemmatimonas aurantiaca (strain DSM 14586 / JCM 11422 / NBRC 100505 / T-27).